Reading from the N-terminus, the 444-residue chain is S-locus-specific glycoprotein (444 aa).

The N-terminal stretch at 1–28 (MRGVIPNYHHSYTLFFFVILVLFPHVFS) is a signal peptide. The Bulb-type lectin domain occupies 31–159 (TLSPNEALTI…KTNDLDRFMW (129 aa)). N-linked (GlcNAc...) asparagine glycans are attached at residues N43, N125, N243, and N396. Positions 356–437 (CGEGDGFLRM…GGQDLYVKVA (82 aa)) constitute a PAN domain. 2 cysteine pairs are disulfide-bonded: C387/C412 and C395/C397.

In terms of tissue distribution, stigma.

Functionally, involved in sporophytic self-incompatibility system (the inability of flowering plants to achieve self-fertilization). This chain is S-locus-specific glycoprotein (SLSG), found in Brassica oleracea var. alboglabra (Chinese kale).